Here is a 507-residue protein sequence, read N- to C-terminus: NADH-quinone oxidoreductase subunit N (507 aa).

15 helical membrane-spanning segments follow: residues 17–37, 46–66, 81–101, 113–133, 134–154, 168–188, 190–210, 211–231, 245–265, 279–299, 307–327, 334–354, 392–412, 425–445, and 478–498; these read LVTL…MLTA, VMIL…LSQG, YALF…ILCY, ALYI…ASSH, FASF…LIAY, YLIL…LVYA, LGTM…AALE, LYGL…LALV, PVPI…VLLL, ITFA…LLAL, ILAY…LAFD, VAYF…VVTV, AGVF…MGFI, SLWM…FYYM, and LAAL…LIGV.

This sequence belongs to the complex I subunit 2 family. As to quaternary structure, NDH-1 is composed of 14 different subunits. Subunits NuoA, H, J, K, L, M, N constitute the membrane sector of the complex.

Its subcellular location is the cell inner membrane. It catalyses the reaction a quinone + NADH + 5 H(+)(in) = a quinol + NAD(+) + 4 H(+)(out). NDH-1 shuttles electrons from NADH, via FMN and iron-sulfur (Fe-S) centers, to quinones in the respiratory chain. The immediate electron acceptor for the enzyme in this species is believed to be ubiquinone. Couples the redox reaction to proton translocation (for every two electrons transferred, four hydrogen ions are translocated across the cytoplasmic membrane), and thus conserves the redox energy in a proton gradient. The protein is NADH-quinone oxidoreductase subunit N of Nitrosospira multiformis (strain ATCC 25196 / NCIMB 11849 / C 71).